A 146-amino-acid polypeptide reads, in one-letter code: 3-hydroxyacyl-[acyl-carrier-protein] dehydratase FabZ (146 aa).

The active site involves His-51.

This sequence belongs to the thioester dehydratase family. FabZ subfamily.

It localises to the cytoplasm. It catalyses the reaction a (3R)-hydroxyacyl-[ACP] = a (2E)-enoyl-[ACP] + H2O. Its function is as follows. Involved in unsaturated fatty acids biosynthesis. Catalyzes the dehydration of short chain beta-hydroxyacyl-ACPs and long chain saturated and unsaturated beta-hydroxyacyl-ACPs. This chain is 3-hydroxyacyl-[acyl-carrier-protein] dehydratase FabZ, found in Staphylococcus aureus (strain Mu3 / ATCC 700698).